A 523-amino-acid polypeptide reads, in one-letter code: Cryptochrome DASH (523 aa).

The region spanning 6–142 (RVIICLLRND…KYQTFWGSTL (137 aa)) is the Photolyase/cryptochrome alpha/beta domain. 2 disordered regions span residues 174 to 211 (RPTFQMPDKLKPLPSGLEEGSVPSHEDFDQQDPLTDPR) and 486 to 523 (KPAGSWEKSARRGKGPSHTPKQHKNRGIDFYFSRNKDV). Residues 496–510 (RRGKGPSHTPKQHKN) are compositionally biased toward basic residues.

Belongs to the DNA photolyase class-1 family. The cofactor is FAD. Requires (6R)-5,10-methylene-5,6,7,8-tetrahydrofolate as cofactor.

In terms of biological role, may have a photoreceptor function. Has weak cyclobutyl pyrimidine photolyase activity when expressed in E.coli and when tested in vitro. The sequence is that of Cryptochrome DASH (cry-dash) from Xenopus laevis (African clawed frog).